We begin with the raw amino-acid sequence, 630 residues long: Transposase B from transposon Tn554 (630 aa).

The Core-binding (CB) domain occupies 216–302 (TYFKQLVKRY…ILEGLFSTLL (87 aa)). The region spanning 326 to 513 (AKPRFIDEFV…FDETLKNEFT (188 aa)) is the Tyr recombinase domain. Active-site residues include R363, K391, H465, R468, and H491. The O-(3'-phospho-DNA)-tyrosine intermediate role is filled by Y500.

Belongs to the 'phage' integrase family.

Functionally, one of three proteins encoded by transposon Tn554 required for its transposition. The protein is Transposase B from transposon Tn554 (tnpB1) of Staphylococcus aureus (strain Mu50 / ATCC 700699).